Reading from the N-terminus, the 69-residue chain is DNA-directed RNA polymerase subunit epsilon (69 aa).

This sequence belongs to the RNA polymerase subunit epsilon family. As to quaternary structure, RNAP is composed of a core of 2 alpha, a beta and a beta' subunit. The core is associated with a delta subunit, and at least one of epsilon or omega. When a sigma factor is associated with the core the holoenzyme is formed, which can initiate transcription.

The catalysed reaction is RNA(n) + a ribonucleoside 5'-triphosphate = RNA(n+1) + diphosphate. Functionally, a non-essential component of RNA polymerase (RNAP). In Geobacillus sp. (strain WCH70), this protein is DNA-directed RNA polymerase subunit epsilon.